The chain runs to 218 residues: Outer-membrane lipoprotein LolB (218 aa).

Positions 1–20 (MSQVIRTLALTGLALAGLSG) are cleaved as a signal peptide. Cysteine 21 carries N-palmitoyl cysteine lipidation. A lipid anchor (S-diacylglycerol cysteine) is attached at cysteine 21.

It belongs to the LolB family. In terms of assembly, monomer.

It localises to the cell outer membrane. Plays a critical role in the incorporation of lipoproteins in the outer membrane after they are released by the LolA protein. This is Outer-membrane lipoprotein LolB from Xanthomonas campestris pv. campestris (strain B100).